A 194-amino-acid chain; its full sequence is Peptidyl-tRNA hydrolase (194 aa).

Tyr-17 serves as a coordination point for tRNA. The active-site Proton acceptor is the His-22. Residues Phe-68, Asn-70, and Asn-116 each contribute to the tRNA site.

It belongs to the PTH family. In terms of assembly, monomer.

Its subcellular location is the cytoplasm. The catalysed reaction is an N-acyl-L-alpha-aminoacyl-tRNA + H2O = an N-acyl-L-amino acid + a tRNA + H(+). Functionally, hydrolyzes ribosome-free peptidyl-tRNAs (with 1 or more amino acids incorporated), which drop off the ribosome during protein synthesis, or as a result of ribosome stalling. In terms of biological role, catalyzes the release of premature peptidyl moieties from peptidyl-tRNA molecules trapped in stalled 50S ribosomal subunits, and thus maintains levels of free tRNAs and 50S ribosomes. This is Peptidyl-tRNA hydrolase from Proteus mirabilis (strain HI4320).